Consider the following 554-residue polypeptide: Formate--tetrahydrofolate ligase (554 aa).

64–71 is an ATP binding site; the sequence is TPYGEGKT.

This sequence belongs to the formate--tetrahydrofolate ligase family.

It catalyses the reaction (6S)-5,6,7,8-tetrahydrofolate + formate + ATP = (6R)-10-formyltetrahydrofolate + ADP + phosphate. Its pathway is one-carbon metabolism; tetrahydrofolate interconversion. In Caldicellulosiruptor saccharolyticus (strain ATCC 43494 / DSM 8903 / Tp8T 6331), this protein is Formate--tetrahydrofolate ligase.